The chain runs to 218 residues: ATP phosphoribosyltransferase (218 aa).

The protein belongs to the ATP phosphoribosyltransferase family. Short subfamily. In terms of assembly, heteromultimer composed of HisG and HisZ subunits.

The protein localises to the cytoplasm. The enzyme catalyses 1-(5-phospho-beta-D-ribosyl)-ATP + diphosphate = 5-phospho-alpha-D-ribose 1-diphosphate + ATP. Its pathway is amino-acid biosynthesis; L-histidine biosynthesis; L-histidine from 5-phospho-alpha-D-ribose 1-diphosphate: step 1/9. In terms of biological role, catalyzes the condensation of ATP and 5-phosphoribose 1-diphosphate to form N'-(5'-phosphoribosyl)-ATP (PR-ATP). Has a crucial role in the pathway because the rate of histidine biosynthesis seems to be controlled primarily by regulation of HisG enzymatic activity. This chain is ATP phosphoribosyltransferase, found in Trichormus variabilis (strain ATCC 29413 / PCC 7937) (Anabaena variabilis).